The sequence spans 258 residues: tRNA pseudouridine synthase A (258 aa).

Aspartate 52 serves as the catalytic Nucleophile. Tyrosine 110 contributes to the substrate binding site.

Belongs to the tRNA pseudouridine synthase TruA family. In terms of assembly, homodimer.

The catalysed reaction is uridine(38/39/40) in tRNA = pseudouridine(38/39/40) in tRNA. Formation of pseudouridine at positions 38, 39 and 40 in the anticodon stem and loop of transfer RNAs. The sequence is that of tRNA pseudouridine synthase A from Francisella tularensis subsp. holarctica (strain FTNF002-00 / FTA).